Reading from the N-terminus, the 396-residue chain is Putative 3-phosphoinositide-dependent protein kinase 2 (396 aa).

The span at 1–11 (MVRTQTESSTP) shows a compositional bias: polar residues. The disordered stretch occupies residues 1–53 (MVRTQTESSTPPGIPGGSRQGPAMDGTAAEPRPGAGSLQHAQPPPQPRKKRPE). The region spanning 55-315 (FKFGKILGEG…YGPLKAHPFF (261 aa)) is the Protein kinase domain. ATP is bound by residues 65–67 (SFS) and lysine 84. Residues 86-130 (LEKRHIIKENKVPYVTRERDVMSRLDHPFFVKLYFTFQDDEKLYF) form a PIF-pocket region. ATP-binding positions include 133–135 (SYA) and glutamate 139. Aspartate 178 serves as the catalytic Proton acceptor. Glutamate 182 and aspartate 196 together coordinate ATP.

The protein belongs to the protein kinase superfamily. AGC Ser/Thr protein kinase family. PDPK1 subfamily. Post-translationally, phosphorylated on tyrosine and serine/threonine.

Its subcellular location is the cytoplasm. It is found in the membrane. The enzyme catalyses L-seryl-[protein] + ATP = O-phospho-L-seryl-[protein] + ADP + H(+). It catalyses the reaction L-threonyl-[protein] + ATP = O-phospho-L-threonyl-[protein] + ADP + H(+). In terms of biological role, phosphorylates and activates not only PKB/AKT, but also PKA, PKC-zeta, RPS6KA1 and RPS6KB1. May play a general role in signaling processes and in development. This Homo sapiens (Human) protein is Putative 3-phosphoinositide-dependent protein kinase 2.